A 431-amino-acid chain; its full sequence is ETS domain-containing protein Elk-4 (431 aa).

Residues 5–85 (ITLWQFLLQL…NGQKFVYKFV (81 aa)) constitute a DNA-binding region (ETS). Residues 114 to 139 (SSSSKDVENGGKDKPPQPGAKTSSRN) form a disordered region. Residues 118–128 (KDVENGGKDKP) show a composition bias toward basic and acidic residues. Lys-167 participates in a covalent cross-link: Glycyl lysine isopeptide (Lys-Gly) (interchain with G-Cter in SUMO2). At Ser-180 the chain carries Phosphoserine. Disordered stretches follow at residues 251–282 (TTPP…DTDI), 294–323 (ENLS…KKPK), and 411–431 (TLSG…LQKT). Residues 261–273 (LQEPPRTPSPPLS) show a composition bias toward pro residues. Residues 299-313 (EPKDQDSVLLEKDKV) show a composition bias toward basic and acidic residues.

It belongs to the ETS family. As to quaternary structure, interacts with SIRT7.

Its subcellular location is the nucleus. Functionally, involved in both transcriptional activation and repression. Interaction with SIRT7 leads to recruitment and stabilization of SIRT7 at promoters, followed by deacetylation of histone H3 at 'Lys-18' (H3K18Ac) and subsequent transcription repression. Forms a ternary complex with the serum response factor (SRF). Requires DNA-bound SRF for ternary complex formation and makes extensive DNA contacts to the 5'side of SRF, but does not bind DNA autonomously. The protein is ETS domain-containing protein Elk-4 (ELK4) of Homo sapiens (Human).